The sequence spans 369 residues: MSDPVQPLLDEHAQLQRELADPAVHADAGRARKLGRRYSELNGIVEAHRRVERLSEDLEAARELGSMDPELAAEVKPLEEELAVAREALRRKLVPRDPDDGRNVILEVKAGEGGDESALFAGDLLRMYMRFAEQSGLKTEILSSTPTELGGYKDVQLAVKGSSSDPSEGAWARFKYEGGVHRVQRVPVTESQGRVHTSAAGVLVFPEVDEPDEIDISQNDLKIDVYRSSGPGGQSVNTTDSAVRITHVPTGIVVSMQNEKSQLQNREAAMRVLRARLLAHQQEQIDAENAAARKSQVRTVDRSERIRTYNFPENRIADHRTGYKAYNLDHVLDGALEPVIASAVELDEKARLEQLGQDSAEQGSAGRRG.

N5-methylglutamine is present on glutamine 234.

This sequence belongs to the prokaryotic/mitochondrial release factor family. Methylated by PrmC. Methylation increases the termination efficiency of RF1.

It localises to the cytoplasm. Functionally, peptide chain release factor 1 directs the termination of translation in response to the peptide chain termination codons UAG and UAA. This Kocuria rhizophila (strain ATCC 9341 / DSM 348 / NBRC 103217 / DC2201) protein is Peptide chain release factor 1.